A 245-amino-acid chain; its full sequence is Venom nerve growth factor 1 (245 aa).

An N-terminal signal peptide occupies residues M1–A18. Positions A19 to R125 are excised as a propeptide. Basic and acidic residues predominate over residues G47 to D66. A disordered region spans residues G47 to L69. 3 cysteine pairs are disulfide-bonded: C139–C206, C182–C234, and C194–C236. Residues N148 and N151 are each glycosylated (N-linked (GlcNAc...) asparagine).

Belongs to the NGF-beta family. In terms of assembly, homodimer; non-covalently linked. In terms of tissue distribution, expressed by the venom gland.

Its subcellular location is the secreted. Nerve growth factor is important for the development and maintenance of the sympathetic and sensory nervous systems. It stimulates division and differentiation of sympathetic and embryonic sensory neurons as well as basal forebrain cholinergic neurons in the brain. Its relevance in the snake venom is not clear. However, it has been shown to inhibit metalloproteinase-dependent proteolysis of platelet glycoprotein Ib alpha, suggesting a metalloproteinase inhibition to prevent metalloprotease autodigestion and/or protection against prey proteases. Binds a lipid between the two protein chains in the homodimer. The lipid-bound form promotes histamine relase from mouse mast cells, contrary to the lipid-free form. The protein is Venom nerve growth factor 1 of Tropidechis carinatus (Australian rough-scaled snake).